Here is a 55-residue protein sequence, read N- to C-terminus: MAVPKFKKSRANTRARRSQWKADNVELQTQKINGQEVQIPRRLVKAAQLGLIDLD.

A compositionally biased stretch (basic residues) spans 1-19; sequence MAVPKFKKSRANTRARRSQ. Residues 1–22 form a disordered region; the sequence is MAVPKFKKSRANTRARRSQWKA.

This sequence belongs to the bacterial ribosomal protein bL32 family.

This is Large ribosomal subunit protein bL32 from Corynebacterium urealyticum (strain ATCC 43042 / DSM 7109).